The primary structure comprises 1209 residues: Calcium-activated potassium channel subunit alpha-1 (1209 aa).

Over residues Met1 to Glu26 the composition is skewed to gly residues. Disordered stretches follow at residues Met1–Leu29 and Leu42–Glu64. The Extracellular portion of the chain corresponds to Met1 to Met87. Positions Ser45–Ser61 are enriched in low complexity. A helical transmembrane segment spans residues Trp88–Leu108. Over Trp109–Arg179 the chain is Cytoplasmic. Residues Cys119, Cys120, and Cys122 are each lipidated (S-palmitoyl cysteine). A helical transmembrane segment spans residues Val180 to Ser200. The Extracellular portion of the chain corresponds to Ser201–Thr215. A helical membrane pass occupies residues Leu216 to Ala236. The Cytoplasmic portion of the chain corresponds to Ala237–Lys240. Residues Leu241–Val261 traverse the membrane as a helical segment. Residues Ser262–Leu265 are Extracellular-facing. The helical; Voltage-sensor transmembrane segment at Asn266 to Ile286 threads the bilayer. Residues Leu287–Leu301 lie on the Cytoplasmic side of the membrane. A helical transmembrane segment spans residues Val302–Val322. The Extracellular portion of the chain corresponds to Glu323 to Gln336. The segment at residues Ala337–Val359 is an intramembrane region (pore-forming). The short motif at Thr353–Tyr356 is the Selectivity for potassium element. At Tyr360–Leu368 the chain is on the extracellular side. Residues Phe369–Ile389 traverse the membrane as a helical segment. Topologically, residues Glu390–Arg1209 are cytoplasmic. Positions Arg408–Ile550 constitute an RCK N-terminal 1 domain. Mg(2+) contacts are provided by Glu440, Gln463, and Glu465. The segment at Leu557–Phe577 is segment S7. The tract at residues Leu614–Ile634 is segment S8. A heme-binding motif region spans residues Cys682–His686. The segment at Glu704 to Arg734 is disordered. A Phosphothreonine modification is found at Thr710. Ser712, Ser725, and Ser729 each carry phosphoserine. The tract at residues Val784–Leu804 is segment S9. Positions Ser786 to Pro930 constitute an RCK N-terminal 2 domain. Phosphothreonine is present on Thr917. Phosphoserine occurs at positions 925 and 929. A Calcium bowl motif is present at residues Thr977 to Glu999. Ca(2+) is bound by residues Gln986, Asp989, Asp992, and Asp994. Positions Phe1006–Phe1026 are segment S10. Residues Arg1160–Ser1185 are compositionally biased toward low complexity. The interval Arg1160–Arg1209 is disordered. Residues Lys1194 to Arg1209 show a composition bias toward basic and acidic residues. Phosphoserine occurs at positions 1195 and 1198.

Belongs to the potassium channel family. Calcium-activated (TC 1.A.1.3) subfamily. KCa1.1/KCNMA1 sub-subfamily. As to quaternary structure, homotetramer; which constitutes the calcium-activated potassium channel. Interacts with beta subunits KCNMB1, KCNMB2, KCNMB3 and KCNMB4. Interacts with gamma subunits LRRC26, LRRC38, LRRC52 and LRRC55. Beta and gamma subunits are accessory, and modulate its activity. Interacts with RAB11B. Post-translationally, phosphorylated. Phosphorylation by kinases such as PKA and/or PKG. In smooth muscles, phosphorylation affects its activity. In terms of processing, palmitoylation by ZDHHC22 and ZDHHC23 within the intracellular linker between the S0 and S1 transmembrane domains regulates localization to the plasma membrane. Depalmitoylated by LYPLA1 and LYPLAL1, leading to retard exit from the trans-Golgi network.

The protein localises to the cell membrane. It is found in the endoplasmic reticulum membrane. The enzyme catalyses K(+)(in) = K(+)(out). Its activity is regulated as follows. Ethanol and carbon monoxide-bound heme increase channel activation. With respect to regulation, heme inhibits channel activation. Its function is as follows. Potassium channel activated by both membrane depolarization or increase in cytosolic Ca(2+) that mediates export of K(+). It is also activated by the concentration of cytosolic Mg(2+). Its activation dampens the excitatory events that elevate the cytosolic Ca(2+) concentration and/or depolarize the cell membrane. It therefore contributes to repolarization of the membrane potential. Plays a key role in controlling excitability in a number of systems, such as regulation of the contraction of smooth muscle, the tuning of hair cells in the cochlea, regulation of transmitter release, and innate immunity. In smooth muscles, its activation by high level of Ca(2+), caused by ryanodine receptors in the sarcoplasmic reticulum, regulates the membrane potential. In cochlea cells, its number and kinetic properties partly determine the characteristic frequency of each hair cell and thereby helps to establish a tonotopic map. Kinetics of KCNMA1 channels are determined by alternative splicing, phosphorylation status and its combination with modulating beta subunits. Highly sensitive to both iberiotoxin (IbTx) and charybdotoxin (CTX). Potassium channel activated by both membrane depolarization or increase in cytosolic Ca(2+) that mediates export of K(+). The chain is Calcium-activated potassium channel subunit alpha-1 (Kcnma1) from Rattus norvegicus (Rat).